Here is a 307-residue protein sequence, read N- to C-terminus: Formate hydrogenlyase subunit 4 (307 aa).

Over Met1 to Ser2 the chain is Periplasmic. A helical membrane pass occupies residues Val3–Ile23. At Thr24–Thr67 the chain is on the cytoplasmic side. A helical membrane pass occupies residues Pro68–Gly88. Residues Ser89–Gln93 lie on the Periplasmic side of the membrane. Residues Leu94–Ser114 traverse the membrane as a helical segment. The Cytoplasmic portion of the chain corresponds to Gly115–Ala131. A helical membrane pass occupies residues Met132–Ala152. The Periplasmic segment spans residues Gly153–Trp167. The chain crosses the membrane as a helical span at residues Pro168–Ile188. The Cytoplasmic portion of the chain corresponds to Glu189 to Lys221. The chain crosses the membrane as a helical span at residues Trp222–Trp242. The Periplasmic segment spans residues Gly243 to Leu253. The chain crosses the membrane as a helical span at residues Leu254–Phe274. Over Glu275–Asp284 the chain is Cytoplasmic. The helical transmembrane segment at Ile285–Leu305 threads the bilayer. At Ala306–Ala307 the chain is on the periplasmic side.

It belongs to the complex I subunit 1 family. As to quaternary structure, FHL comprises of a formate dehydrogenase, unidentified electron carriers and a hydrogenase (isoenzyme 3). In this non-energy conserving pathway molecular hydrogen and carbodioxide from formate are released.

The protein localises to the cell inner membrane. This chain is Formate hydrogenlyase subunit 4 (hycD), found in Escherichia coli (strain K12).